Here is a 103-residue protein sequence, read N- to C-terminus: Large ribosomal subunit protein bL21 (103 aa).

This sequence belongs to the bacterial ribosomal protein bL21 family. Part of the 50S ribosomal subunit. Contacts protein L20.

In terms of biological role, this protein binds to 23S rRNA in the presence of protein L20. The protein is Large ribosomal subunit protein bL21 of Desulforapulum autotrophicum (strain ATCC 43914 / DSM 3382 / VKM B-1955 / HRM2) (Desulfobacterium autotrophicum).